Consider the following 500-residue polypeptide: MSEKLDFITKNNLWTDKQRDAADKVLAEIDSLGLEMIRLSWADQYGLLRGKALSVAALKAAFSEGSEVTMAPFSFNLVSEWVFNPFTAGGGFGIDEFDELGGVPSVVMVPDPTTFKVLPWADKTGWMLADLHWKSGEPFPLCPRGIMKKAVKSLSDEGYLFKCGIELEWYLTKIVDRSLSPESLGAPGVQPDAIQVQPVAQGYSYLLEYHLDQVDDIMSKVRKGLLELNLPLRSIEDELAPSQMETTFDVMEGLEAADAALLIKSAIKQICSRHGYHATFMCKPAINGFSVASGWHMHQSLVDKDTRKNLFIPSEGEVVSPLGRAYAGGLLANGSAASSFTTPTVNGYRRRQPHSLAPDRRAWAKENKAAMVRVISATGDPASRIENRIGEPGANPYLYMASQIVSGLDGIKIKRDPGGLQGAPYGAQVPMLPTALAEALDALEHDSELFRSCFGDTFIKYWLQLRRSEWARFLDAEGAEAAEPTGAVTQWEQKEYFNLL.

The GS beta-grasp domain occupies 32–136; it reads LGLEMIRLSW…MLADLHWKSG (105 aa). The GS catalytic domain occupies 143–500; sequence PRGIMKKAVK…WEQKEYFNLL (358 aa).

It belongs to the glutamine synthetase family. Homohexamer.

It carries out the reaction aniline + L-glutamate + ATP = N(5)-phenyl-L-glutamine + ADP + phosphate. Involved in the initial oxidation of aniline to catechol by the release of its amino group. Catalyzes the ATP-dependent ligation of L-glutamate to aniline to yield gamma-glutamylanilide (gamma-GA). AtdA1 has a broad substrate range and is able to convert the following anilines, including chlorinated and methylated forms of aniline: aniline (100%), o-chloroaniline (92%), m-chloroaniline (69%), p-chloroaniline (92%), o-methylaniline (40%), m-methylaniline (27%) and p-methylaniline (45%). This is Gamma-glutamylanilide synthase from Acinetobacter sp.